The sequence spans 303 residues: Cysteine synthase B (303 aa).

An N6-(pyridoxal phosphate)lysine modification is found at Lys-41. Pyridoxal 5'-phosphate-binding positions include Asn-71, 174-178, and Ser-255; that span reads GTTGT.

This sequence belongs to the cysteine synthase/cystathionine beta-synthase family. It depends on pyridoxal 5'-phosphate as a cofactor.

It carries out the reaction O-acetyl-L-serine + hydrogen sulfide = L-cysteine + acetate. It participates in amino-acid biosynthesis; L-cysteine biosynthesis; L-cysteine from L-serine: step 2/2. In terms of biological role, two cysteine synthase enzymes are found. Both catalyze the same reaction. Cysteine synthase B can also use thiosulfate in place of sulfide to give cysteine thiosulfonate as a product. The chain is Cysteine synthase B (cysM) from Salmonella typhimurium (strain LT2 / SGSC1412 / ATCC 700720).